A 156-amino-acid chain; its full sequence is SsrA-binding protein (156 aa).

It belongs to the SmpB family.

The protein localises to the cytoplasm. In terms of biological role, required for rescue of stalled ribosomes mediated by trans-translation. Binds to transfer-messenger RNA (tmRNA), required for stable association of tmRNA with ribosomes. tmRNA and SmpB together mimic tRNA shape, replacing the anticodon stem-loop with SmpB. tmRNA is encoded by the ssrA gene; the 2 termini fold to resemble tRNA(Ala) and it encodes a 'tag peptide', a short internal open reading frame. During trans-translation Ala-aminoacylated tmRNA acts like a tRNA, entering the A-site of stalled ribosomes, displacing the stalled mRNA. The ribosome then switches to translate the ORF on the tmRNA; the nascent peptide is terminated with the 'tag peptide' encoded by the tmRNA and targeted for degradation. The ribosome is freed to recommence translation, which seems to be the essential function of trans-translation. In Thermoanaerobacter pseudethanolicus (strain ATCC 33223 / 39E) (Clostridium thermohydrosulfuricum), this protein is SsrA-binding protein.